The sequence spans 424 residues: Protein pellino (424 aa).

Positions 1–21 (MVKRTDGTESPILAEDGGDGH) are disordered. A Phosphoserine modification is found at Ser10.

It belongs to the pellino family. As to quaternary structure, interacts with pll.

Its function is as follows. Scaffold protein involved in the Toll signaling pathway via its interaction with pelle/pll kinase. The chain is Protein pellino (Pli) from Drosophila melanogaster (Fruit fly).